Consider the following 454-residue polypeptide: MISLFDMFKVGIGPSSSHTVGPMKAGKQFVDDLVEKGLLDSVTRVAVDVYGSLSLTGKGHHTDIAIIMGLAGNEPATVDIDSIPGFIRDVEERERLLLAQGRHEVDFPRDNGMRFHNGNLPLHENGMQIHAYNGDEVVYSKTYYSIGGGFIVDEEHFGQDAANEVSVPYPFKSATELLAYCNETGYSLSGLAMQNELALHSKKEIDEYFAHVWQTMQACIDRGMNTEGVLPGPLRVPRRASALRRMLVSSDKLSNDPMNVIDWVNMFALAVNEENAAGGRVVTAPTNGACGIVPAVLAYYDHFIESVSPDIYTRYFMAAGAIGALYKMNASISGAEVGCQGEVGVACSMAAAGLAELLGGSPEQVCVAAEIGMEHNLGLTCDPVAGQVQVPCIERNAIASVKAINAARMALRRTSAPRVSLDKVIETMYETGKDMNAKYRETSRGGLAIKVQCD.

The protein belongs to the iron-sulfur dependent L-serine dehydratase family. The cofactor is [4Fe-4S] cluster. In terms of processing, activated by post-translational modification by a system involving at least three gene products. Activation is mimicked in vitro by iron and dithiothreitol. There is considerable evidence for a free-radical activation mechanism.

The catalysed reaction is L-serine = pyruvate + NH4(+). The protein operates within carbohydrate biosynthesis; gluconeogenesis. Also deaminates threonine, particularly when it is present in high concentration. This chain is L-serine dehydratase 1 (sdaA), found in Escherichia coli (strain K12).